The chain runs to 668 residues: Metastasis-associated protein MTA2 (668 aa).

Residues 1 to 144 (MAANMYRVGD…PVQKTLLADQ (144 aa)) enclose the BAH domain. 2 positions are modified to phosphoserine: Ser52 and Ser54. In terms of domain architecture, ELM2 spans 145-256 (GEIRVGCKYQ…KAMSTLVPQG (112 aa)). The residue at position 152 (Lys152) is an N6-acetyllysine. Residues 263-315 (DEMEEWSASEAMLFEEALEKYGKDFNDIRQDFLPWKSLASIVQFYYMWKTTDR) enclose the SANT domain. The GATA-type; atypical zinc-finger motif lies at 367-394 (CESCHTTQSAQWYAWGPPNMQCRLCASC). The span at 409-419 (QLEGATRGTTE) shows a compositional bias: polar residues. Residues 409–437 (QLEGATRGTTEPHSRGHLSRPEAQSLSPY) are disordered. Phosphoserine occurs at positions 433 and 435. Lys460 carries the post-translational modification N6-acetyllysine. Lys492 participates in a covalent cross-link: Glycyl lysine isopeptide (Lys-Gly) (interchain with G-Cter in SUMO2 and SUMO3); alternate. A Glycyl lysine isopeptide (Lys-Gly) (interchain with G-Cter in SUMO2); alternate cross-link involves residue Lys492. A Glycyl lysine isopeptide (Lys-Gly) (interchain with G-Cter in SUMO2) cross-link involves residue Lys508. An N6-acetyllysine mark is found at Lys522 and Lys531. Thr534 is modified (phosphothreonine). Ser548 bears the Phosphoserine mark. Residues Lys559 and Lys595 each participate in a glycyl lysine isopeptide (Lys-Gly) (interchain with G-Cter in SUMO2) cross-link. Disordered regions lie at residues 580-599 (ASGIRSSSQPAAKRQKLNPA) and 647-668 (PPVPLPAPSHPASTNEPIVLED).

This sequence belongs to the metastasis-associated protein family. In terms of assembly, component of the nucleosome remodeling and deacetylase (NuRD) repressor complex, composed of core proteins MTA1, MTA2, MTA3, RBBP4, RBBP7, HDAC1, HDAC2, MBD2, MBD3, and peripherally associated proteins CDK2AP1, CDK2AP2, GATAD2A, GATAD2B, CHD3, CHD4 and CHD5. The exact stoichiometry of the NuRD complex is unknown, and some subunits such as MBD2 and MBD3, GATAD2A and GATAD2B, and CHD3, CHD4 and CHD5 define mutually exclusive NuRD complexes. Interacts with CHD3. Interacts with CHD4. Interacts with GATAD2A. Interacts with HDAC7. Interacts with MBD3. Interacts with p53/TP53. Interacts with MINT. Interacts with PIMREG. Interacts with NACC2. Interacts with ERCC6. Interacts with PWWP2B. Interacts with transcription factor BCL11A. In terms of tissue distribution, widely expressed.

It is found in the nucleus. May function as a transcriptional coregulator. Acts as a component of the histone deacetylase NuRD complex which participates in the remodeling of chromatin. This chain is Metastasis-associated protein MTA2 (MTA2), found in Homo sapiens (Human).